A 542-amino-acid chain; its full sequence is CTP synthase (542 aa).

The amidoligase domain stretch occupies residues 1-265; the sequence is MTRYIFVTGG…DDFVVERFGL (265 aa). Residue Ser-13 participates in CTP binding. A UTP-binding site is contributed by Ser-13. Residues 14–19 and Asp-71 contribute to the ATP site; that span reads SLGKGI. Asp-71 and Glu-139 together coordinate Mg(2+). CTP contacts are provided by residues 146 to 148, 186 to 191, and Lys-222; these read DIE and KTKPTQ. UTP-binding positions include 186–191 and Lys-222; that span reads KTKPTQ. One can recognise a Glutamine amidotransferase type-1 domain in the interval 290–541; sequence TIAMVGKYME…VKAALAQKNK (252 aa). Position 351 (Gly-351) interacts with L-glutamine. Cys-378 acts as the Nucleophile; for glutamine hydrolysis in catalysis. L-glutamine is bound by residues 379-382, Glu-402, and Arg-469; that span reads LGMQ. Active-site residues include His-514 and Glu-516.

The protein belongs to the CTP synthase family. As to quaternary structure, homotetramer.

It catalyses the reaction UTP + L-glutamine + ATP + H2O = CTP + L-glutamate + ADP + phosphate + 2 H(+). The catalysed reaction is L-glutamine + H2O = L-glutamate + NH4(+). The enzyme catalyses UTP + NH4(+) + ATP = CTP + ADP + phosphate + 2 H(+). The protein operates within pyrimidine metabolism; CTP biosynthesis via de novo pathway; CTP from UDP: step 2/2. Allosterically activated by GTP, when glutamine is the substrate; GTP has no effect on the reaction when ammonia is the substrate. The allosteric effector GTP functions by stabilizing the protein conformation that binds the tetrahedral intermediate(s) formed during glutamine hydrolysis. Inhibited by the product CTP, via allosteric rather than competitive inhibition. Its function is as follows. Catalyzes the ATP-dependent amination of UTP to CTP with either L-glutamine or ammonia as the source of nitrogen. Regulates intracellular CTP levels through interactions with the four ribonucleotide triphosphates. This chain is CTP synthase, found in Pseudomonas putida (strain GB-1).